A 347-amino-acid chain; its full sequence is Protein RecA (347 aa).

Residue 65–72 coordinates ATP; sequence GPESSGKT. Over residues 327 to 336 the composition is skewed to basic and acidic residues; sequence KFEPTELSRE. Positions 327-347 are disordered; it reads KFEPTELSREEGDEDTLEDTM. Residues 337-347 are compositionally biased toward acidic residues; it reads EGDEDTLEDTM.

It belongs to the RecA family.

It localises to the cytoplasm. Its function is as follows. Can catalyze the hydrolysis of ATP in the presence of single-stranded DNA, the ATP-dependent uptake of single-stranded DNA by duplex DNA, and the ATP-dependent hybridization of homologous single-stranded DNAs. It interacts with LexA causing its activation and leading to its autocatalytic cleavage. This chain is Protein RecA, found in Xylella fastidiosa (strain 9a5c).